Here is a 65-residue protein sequence, read N- to C-terminus: Photosystem II reaction center protein J (65 aa).

A helical membrane pass occupies residues 35-55 (LWLVATAGGIAVIFVLGIFFY).

The protein belongs to the PsbJ family. In terms of assembly, PSII is composed of 1 copy each of membrane proteins PsbA, PsbB, PsbC, PsbD, PsbE, PsbF, PsbH, PsbI, PsbJ, PsbK, PsbL, PsbM, PsbT, PsbX, PsbY, Psb30/Ycf12, peripheral proteins PsbO, CyanoQ (PsbQ), PsbU, PsbV and a large number of cofactors. It forms dimeric complexes.

The protein localises to the cellular thylakoid membrane. In terms of biological role, one of the components of the core complex of photosystem II (PSII). PSII is a light-driven water:plastoquinone oxidoreductase that uses light energy to abstract electrons from H(2)O, generating O(2) and a proton gradient subsequently used for ATP formation. It consists of a core antenna complex that captures photons, and an electron transfer chain that converts photonic excitation into a charge separation. This is Photosystem II reaction center protein J from Prochlorococcus marinus (strain MIT 9312).